Here is a 247-residue protein sequence, read N- to C-terminus: Phosphoglycerate mutase 1 (247 aa).

Substrate contacts are provided by residues 8-15 and 21-22; these read RHGQSEWN and TG. His9 (tele-phosphohistidine intermediate) is an active-site residue. Residue Ser12 is modified to Phosphoserine. A Glycyl lysine isopeptide (Lys-Gly) (interchain with G-Cter in ubiquitin) cross-link involves residue Lys31. At Tyr49 the chain carries Phosphotyrosine. Residue Lys57 forms a Glycyl lysine isopeptide (Lys-Gly) (interchain with G-Cter in ubiquitin) linkage. Arg60 lines the substrate pocket. Lys71 participates in a covalent cross-link: Glycyl lysine isopeptide (Lys-Gly) (interchain with G-Cter in ubiquitin). Glu87 functions as the Proton donor/acceptor in the catalytic mechanism. Substrate is bound by residues 87-90, Lys98, and 114-115; these read ERHY and RR. A phosphoserine mark is found at Ser116, Ser127, and Ser128. Glycyl lysine isopeptide (Lys-Gly) (interchain with G-Cter in ubiquitin) cross-links involve residues Lys139 and Lys175. 183–184 contributes to the substrate binding site; it reads GN. Ser185 carries the post-translational modification Phosphoserine. A Glycyl lysine isopeptide (Lys-Gly) (interchain with G-Cter in ubiquitin) cross-link involves residue Lys191. Ser197 carries the phosphoserine modification.

Belongs to the phosphoglycerate mutase family. BPG-dependent PGAM subfamily. In terms of assembly, homotetramer: dimer of dimers.

The protein resides in the cytoplasm. Its subcellular location is the mitochondrion outer membrane. It is found in the mitochondrion intermembrane space. The catalysed reaction is (2R)-2-phosphoglycerate = (2R)-3-phosphoglycerate. Its pathway is carbohydrate degradation; glycolysis; pyruvate from D-glyceraldehyde 3-phosphate: step 3/5. Inhibited by inositol hexakisphosphate and benzene tri-, tetra- and hexacarboxylates. Its function is as follows. Interconversion of 3- and 2-phosphoglycerate with 2,3-bisphosphoglycerate as the primer of the reaction. Can also catalyze the reaction of EC 5.4.2.4 (synthase), but with a reduced activity. The polypeptide is Phosphoglycerate mutase 1 (GPM1) (Saccharomyces cerevisiae (strain ATCC 204508 / S288c) (Baker's yeast)).